The primary structure comprises 4486 residues: Dynein axonemal heavy chain 9 (4486 aa).

Residues 1–1831 (MRLAEERAAL…FANICDAQFL (1831 aa)) are stem. Coiled-coil stretches lie at residues 381-410 (DLLR…EFQD), 504-529 (QSTD…LGTI), 639-662 (AEGK…ETRL), 752-823 (TLLE…TWVT), and 1326-1355 (NINV…AWDA). AAA regions lie at residues 1832 to 2053 (YSYE…VLVV), 2113 to 2334 (ALVR…TRFK), 2440 to 2688 (EFDP…IFQG), and 2787 to 3036 (NHNE…EQRY). Residues 1870–1877 (GPAGTGKT), 2151–2158 (GGAGTGKS), 2478–2485 (GTAGTGKS), and 2825–2832 (GVGGSGKQ) each bind ATP. Coiled-coil stretches lie at residues 3051-3154 (YQSL…AKAE), 3285-3341 (KRQA…AEVT), and 3640-3675 (LVEN…REHY). The tract at residues 3051–3341 (YQSLLHRHRK…LKCQQEAEVT (291 aa)) is stalk. AAA regions lie at residues 3429 to 3656 (LMDD…EVEK) and 3866 to 4092 (LRDF…VLYN).

It belongs to the dynein heavy chain family. Consists of at least two heavy chains and a number of intermediate and light chains. Interacts with ODAD1. In terms of tissue distribution, expressed in upper and lower respiratory airway epithelia (at protein level). Not detected in spermatozoa (at protein level).

It is found in the cytoplasm. It localises to the cytoskeleton. The protein localises to the cilium axoneme. Its function is as follows. Force generating protein required for cilia beating in respiratory epithelia. Produces force towards the minus ends of microtubules. Dynein has ATPase activity; the force-producing power stroke is thought to occur on release of ADP. The polypeptide is Dynein axonemal heavy chain 9 (Homo sapiens (Human)).